The following is a 206-amino-acid chain: Large ribosomal subunit protein uL4 (206 aa).

A disordered region spans residues 55–80 (AFVSGGGAKPWRQKGTGRARSGSNRS).

It belongs to the universal ribosomal protein uL4 family. In terms of assembly, part of the 50S ribosomal subunit.

In terms of biological role, one of the primary rRNA binding proteins, this protein initially binds near the 5'-end of the 23S rRNA. It is important during the early stages of 50S assembly. It makes multiple contacts with different domains of the 23S rRNA in the assembled 50S subunit and ribosome. Its function is as follows. Forms part of the polypeptide exit tunnel. The protein is Large ribosomal subunit protein uL4 of Nitratidesulfovibrio vulgaris (strain DSM 19637 / Miyazaki F) (Desulfovibrio vulgaris).